The primary structure comprises 150 residues: Large ribosomal subunit protein bL9 (150 aa).

Belongs to the bacterial ribosomal protein bL9 family.

Functionally, binds to the 23S rRNA. The chain is Large ribosomal subunit protein bL9 from Shewanella oneidensis (strain ATCC 700550 / JCM 31522 / CIP 106686 / LMG 19005 / NCIMB 14063 / MR-1).